Consider the following 246-residue polypeptide: Probable transcriptional regulatory protein BVU_3469 (246 aa).

It belongs to the TACO1 family.

It localises to the cytoplasm. In Phocaeicola vulgatus (strain ATCC 8482 / DSM 1447 / JCM 5826 / CCUG 4940 / NBRC 14291 / NCTC 11154) (Bacteroides vulgatus), this protein is Probable transcriptional regulatory protein BVU_3469.